The sequence spans 337 residues: Ketol-acid reductoisomerase (NADP(+)) (337 aa).

The KARI N-terminal Rossmann domain occupies 3–183 (LEMFYDDDAD…GGTRAGVIKT (181 aa)). Residues 26 to 29 (YGSQ), Lys49, Ser52, Ser54, and 84 to 87 (DTAQ) each bind NADP(+). Residue His109 is part of the active site. Gly135 is an NADP(+) binding site. Residues 184–329 (TFKDETETDL…KKLRDLMSWV (146 aa)) form the KARI C-terminal knotted domain. 4 residues coordinate Mg(2+): Asp192, Glu196, Glu228, and Glu232. Residue Ser253 coordinates substrate.

This sequence belongs to the ketol-acid reductoisomerase family. The cofactor is Mg(2+).

The catalysed reaction is (2R)-2,3-dihydroxy-3-methylbutanoate + NADP(+) = (2S)-2-acetolactate + NADPH + H(+). It catalyses the reaction (2R,3R)-2,3-dihydroxy-3-methylpentanoate + NADP(+) = (S)-2-ethyl-2-hydroxy-3-oxobutanoate + NADPH + H(+). It functions in the pathway amino-acid biosynthesis; L-isoleucine biosynthesis; L-isoleucine from 2-oxobutanoate: step 2/4. Its pathway is amino-acid biosynthesis; L-valine biosynthesis; L-valine from pyruvate: step 2/4. Its function is as follows. Involved in the biosynthesis of branched-chain amino acids (BCAA). Catalyzes an alkyl-migration followed by a ketol-acid reduction of (S)-2-acetolactate (S2AL) to yield (R)-2,3-dihydroxy-isovalerate. In the isomerase reaction, S2AL is rearranged via a Mg-dependent methyl migration to produce 3-hydroxy-3-methyl-2-ketobutyrate (HMKB). In the reductase reaction, this 2-ketoacid undergoes a metal-dependent reduction by NADPH to yield (R)-2,3-dihydroxy-isovalerate. This is Ketol-acid reductoisomerase (NADP(+)) from Mycobacterium bovis (strain BCG / Pasteur 1173P2).